The following is a 1238-amino-acid chain: Lysine-specific demethylase JMJ703 (1238 aa).

The interval 56–79 (EECQPSAAVSRSDTPCSTSGTQTC) is disordered. Polar residues predominate over residues 62 to 79 (AAVSRSDTPCSTSGTQTC). Residues 154 to 195 (APVFYPTEEEFEDTLKYIESIRPMAEPYGICRIVPPSSWKPP) form the JmjN domain. Residues 215–266 (KVDKLQNRKSSKKGRRGGMMKRRKLAESEENSATAHTQTGMQQSPERFGFEP) are disordered. The span at 221–238 (NRKSSKKGRRGGMMKRRK) shows a compositional bias: basic residues. A compositionally biased stretch (polar residues) spans 245 to 259 (NSATAHTQTGMQQSP). The region spanning 348 to 514 (KYAQSGWNLN…IGHNAVELYR (167 aa)) is the JmjC domain. The Fe cation site is built by histidine 394, glutamate 396, and histidine 482. 4 disordered regions span residues 699–725 (GPRR…QKDE), 777–798 (YNGG…SSPS), 834–863 (TGDS…SSLE), and 910–978 (ASSQ…LQRT). Over residues 706-719 (SQASAVSLVSSSTS) the composition is skewed to low complexity. The segment covering 910–923 (ASSQQFVRTGPWTQ) has biased composition (polar residues). Residues 924–936 (SASHEASSPSTSA) show a composition bias toward low complexity. Positions 964 to 978 (SFSNQQPNDGRLQRT) are enriched in polar residues. In terms of domain architecture, FYR N-terminal spans 1019–1077 (VVHRFKCSVEPLEIGVVLSGRLWSSSQAIFPKGFRSRVKYFSIVDPIQMAYYISEILDA). Positions 1079 to 1169 (MQGPLFMVKL…HICTEYWRSR (91 aa)) constitute an FYR C-terminal domain.

Requires Fe(2+) as cofactor. Expressed in roots, leaf sheaths, stems and panicles.

The protein resides in the nucleus. It catalyses the reaction N(6),N(6),N(6)-trimethyl-L-lysyl(4)-[histone H3] + 3 2-oxoglutarate + 3 O2 = L-lysyl(4)-[histone H3] + 3 formaldehyde + 3 succinate + 3 CO2. Its function is as follows. Histone demethylase that demethylates 'Lys-4' (H3K4me) of histone H3 with a specific activity for H3K4me3, H3K4me2 and H3K4me1. No activity on H3K9me3/2/1, H3K27me3/2/1 and H3K36me3/2/1. Involved in the control of stem elongation by regulating methylation states of H3K4me3 on cytokinin oxidase (CKX) gene family, which may cause increased expression of CKX genes and reduced cytokinin levels. Prevents ectopic retrotransposition by regulating the levels of H3K4me3 in two non-LTR retrotransposons KARMA and LINE-1 (L1) and reinforcing their repressed states. The polypeptide is Lysine-specific demethylase JMJ703 (JMJ703) (Oryza sativa subsp. japonica (Rice)).